The primary structure comprises 336 residues: MKDRYILAFETSCDETSVAVLKNDDELLSNVIASQIESHKRFGGVVPEVASRHHVEVITACIEEALAEAGITEEDVTAVAVTYGPGLVGALLVGLSAAKAFAWAHGLPLIPVNHMAGHLMAAQSVEPLEFPLLALLVSGGHTELVYVSEAGDYKIVGETRDDAVGEAYDKVGRVMGLTYPAGREIDELAHQGQDIYDFPRAMIKEDNLEFSFSGLKSAFINLHHNAEQKGESLSTEDLCASFQAAVLDILMAKTKKALEKYPVKTLVVAGGVAANKGLRERLAAEVTDVKVIIPPLRLCGDNAGMIAYASVSEWNKENFAGWNLNAKPSLAFDTME.

2 residues coordinate Fe cation: H114 and H118. Residues 136–140 (LVSGG), D169, G182, D186, and N275 each bind substrate. Residue D301 participates in Fe cation binding.

It belongs to the KAE1 / TsaD family. Fe(2+) serves as cofactor.

Its subcellular location is the cytoplasm. It catalyses the reaction L-threonylcarbamoyladenylate + adenosine(37) in tRNA = N(6)-L-threonylcarbamoyladenosine(37) in tRNA + AMP + H(+). Functionally, required for the formation of a threonylcarbamoyl group on adenosine at position 37 (t(6)A37) in tRNAs that read codons beginning with adenine. Is involved in the transfer of the threonylcarbamoyl moiety of threonylcarbamoyl-AMP (TC-AMP) to the N6 group of A37, together with TsaE and TsaB. TsaD likely plays a direct catalytic role in this reaction. The sequence is that of tRNA N6-adenosine threonylcarbamoyltransferase from Streptococcus pneumoniae (strain CGSP14).